The following is a 422-amino-acid chain: Glycine amidinotransferase, mitochondrial (422 aa).

Residues 1 to 37 constitute a mitochondrion transit peptide; the sequence is MLRVRCLRGGSRGAEAAHFIGSRLGRAFTGWVQRSLQ. Active-site residues include Asp253 and His302. Residue Cys406 is the Amidino-cysteine intermediate of the active site. Phosphothreonine is present on Thr416.

The protein belongs to the amidinotransferase family. As to quaternary structure, homodimer.

It localises to the mitochondrion inner membrane. The catalysed reaction is L-arginine + glycine = guanidinoacetate + L-ornithine. It participates in amine and polyamine biosynthesis; creatine biosynthesis; creatine from L-arginine and glycine: step 1/2. In terms of biological role, catalyzes the biosynthesis of guanidinoacetate, the immediate precursor of creatine. Creatine plays a vital role in energy metabolism in muscle tissues. May play a role in embryonic and central nervous system development. The protein is Glycine amidinotransferase, mitochondrial of Gallus gallus (Chicken).